Consider the following 341-residue polypeptide: Spore photoproduct lyase (341 aa).

The Radical SAM core domain occupies 76–304 (SKPSAEYAIP…ESKRKYKWGR (229 aa)). Residues cysteine 90, cysteine 94, and cysteine 97 each contribute to the [4Fe-4S] cluster site. A DNA-binding region (H-T-H motif) is located at residues 217-234 (QAARKVAGAGYKLGFVVA).

It belongs to the radical SAM superfamily. SPL family. In terms of assembly, monomer or homodimer. It depends on [4Fe-4S] cluster as a cofactor. S-adenosyl-L-methionine serves as cofactor.

It catalyses the reaction (5R)-5,6-dihydro-5-(thymidin-7-yl)thymidine in DNA = a thymidine dimer in DNA. Involved in repair of UV radiation-induced DNA damage during spore germination. Can repair thymine dimer 5-thyminyl-5,6-dihydrothymine (known as spore photoproduct (SP)) by in situ monomerization of SP to two thymines. In Geobacillus sp. (strain Y412MC61), this protein is Spore photoproduct lyase (splG).